The primary structure comprises 175 residues: Large ribosomal subunit protein uL10 (175 aa).

It belongs to the universal ribosomal protein uL10 family. As to quaternary structure, part of the ribosomal stalk of the 50S ribosomal subunit. The N-terminus interacts with L11 and the large rRNA to form the base of the stalk. The C-terminus forms an elongated spine to which L12 dimers bind in a sequential fashion forming a multimeric L10(L12)X complex.

In terms of biological role, forms part of the ribosomal stalk, playing a central role in the interaction of the ribosome with GTP-bound translation factors. This chain is Large ribosomal subunit protein uL10, found in Prochlorococcus marinus (strain NATL1A).